Here is a 208-residue protein sequence, read N- to C-terminus: Cysteine-rich protein 2 (208 aa).

The 53-residue stretch at 5 to 57 (CPKCDKTVYFAEKVSSLGKDWHRFCLRCEHCSKTLTPGGHAEHDGKPFCHKPC) folds into the LIM zinc-binding 1 domain. Position 23 is an N6-acetyllysine (K23). The tract at residues 98–117 (TEERKASGPPKGPSKASSVT) is disordered. The residue at position 104 (S104) is a Phosphoserine. Over residues 104–115 (SGPPKGPSKASS) the composition is skewed to low complexity. Positions 126-178 (CPRCNKRVYFAEKVTSLGKDWHRPCLRCERCGKTLTPGGHAEHDGQPYCHKPC) constitute an LIM zinc-binding 2 domain. 2 positions are modified to N6-acetyllysine: K138 and K144.

As to quaternary structure, interacts with TGFB1I1.

The chain is Cysteine-rich protein 2 (CRIP2) from Bos taurus (Bovine).